Reading from the N-terminus, the 121-residue chain is Ribonuclease P protein component (121 aa).

This sequence belongs to the RnpA family. As to quaternary structure, consists of a catalytic RNA component (M1 or rnpB) and a protein subunit.

The enzyme catalyses Endonucleolytic cleavage of RNA, removing 5'-extranucleotides from tRNA precursor.. RNaseP catalyzes the removal of the 5'-leader sequence from pre-tRNA to produce the mature 5'-terminus. It can also cleave other RNA substrates such as 4.5S RNA. The protein component plays an auxiliary but essential role in vivo by binding to the 5'-leader sequence and broadening the substrate specificity of the ribozyme. The chain is Ribonuclease P protein component from Neisseria meningitidis serogroup B (strain ATCC BAA-335 / MC58).